The sequence spans 7968 residues: Obscurin (7968 aa).

5 Ig-like domains span residues 10 to 100, 110 to 202, 236 to 322, 331 to 414, and 420 to 508; these read PRFL…LQVD, PHFL…LVVD, PASP…QTYS, PAVP…RTVA, and GNLL…VSAP. A disulfide bridge connects residues C31 and C82. The disordered stretch occupies residues 228–249; sequence EAMRAEGAPASPPSTGTRTCTV. Positions 240–249 are enriched in polar residues; sequence PSTGTRTCTV. 2 cysteine pairs are disulfide-bonded: C259/C311 and C354/C404. S395 is modified (phosphoserine). One can recognise a Fibronectin type-III 1 domain in the interval 515–612; that stretch reads PPVDPVVKAR…FPGTVHLAPK (98 aa). 12 consecutive Ig-like domains span residues 619–698, 701–790, 798–884, 886–977, 978–1066, 1070–1161, 1162–1252, 1254–1345, 1346–1432, 1438–1524, 1530–1621, and 1622–1719; these read LKAV…MEVR, PGLT…YQLS, LHKD…LRVS, PKVV…DVKE, PKVV…FRLH, PKMM…HITE, PKGV…LHIT, PKAV…DVSE, PKAV…LSFS, PKVV…LSFH, PKAV…HVAE, and PKVV…PQIS. Intrachain disulfides connect C819-C870, C912-C962, C1004-C1054, C1096-C1146, C1188-C1238, C1280-C1330, C1372-C1422, C1464-C1514, C1556-C1606, C1648-C1698, C1723-C1791, and C1830-C1880. Positions 1731 to 1808 constitute a Fibronectin type-III 2 domain; the sequence is KEHEDIILTA…DFPVQVEEVA (78 aa). 29 Ig-like domains span residues 1809–1894, 1896–1982, 1987–2071, 2077–2162, 2165–2249, 2289–2380, 2468–2559, 2564–2643, 2646–2730, 2736–2823, 2826–2908, 2920–2999, 3003–3092, 3095–3183, 3184–3268, 3273–3356, 3359–3444, 3449–3532, 3537–3620, 3625–3708, 3713–3796, 3801–3884, 3890–3973, 3978–4062, 4068–4160, 4171–4239, 4248–4337, 4340–4427, and 4430–4518; these read AKFC…LTVS, PRVV…AALR, PVLF…AKLT, VRLV…LVVT, PVSF…ASVK, PVTL…QSIT, PVVL…REVT, LQDA…LEVR, PVVF…ARVR, VGIT…LIVR, PAAI…STAS, EELT…AQLL, RRVH…LRVT, PSVF…VHAR, PVRF…ATLT, PAQF…ASLT, PMPA…ATLT, PAKF…ATLT, PARF…AMLT, PIKF…AMLT, PSKF…ATLT, PARF…ATLT, PVFR…ATLT, PVRF…ASLS, PKFK…PEVT, TADE…NHAS, PEVT…LKVT, NTVV…FLTV, and WRLE…ARLT. 3 disulfides stabilise this stretch: C2187–C2237, C2311–C2361, and C2490–C2540. An intrachain disulfide couples C2668 to C2718. 2 disulfide bridges follow: C2848–C2898 and C2937–C2987. Residue S2889 is modified to Phosphoserine. Disulfide bonds link C3117/C3167, C3206/C3256, C3295/C3344, C3383/C3432, C3471/C3520, C3559/C3608, C3647/C3696, C3735/C3784, C3823/C3872, C3911/C3961, C4000/C4050, and C4089/C4141. S4015 carries the post-translational modification Phosphoserine. A disulfide bond links C4453 and C4508. Positions 4525-4619 constitute a Fibronectin type-III 3 domain; it reads PPEDAEVVAR…LPQTVRLAEP (95 aa). The 91-residue stretch at 4624–4714 folds into the Ig-like 47 domain; that stretch reads PPQPSAPESR…AAATFQVALS (91 aa). The segment at 4749–4785 is disordered; that stretch reads MSREPTLDSISELPEEDGRSQRLPQEAEEVAPDLSEG. Residue S4750 is modified to Phosphoserine. Phosphothreonine is present on T4754. Residue S4757 is modified to Phosphoserine. T4788 is modified (phosphothreonine). Residue S4805 is modified to Phosphoserine. Positions 4820 to 4860 are disordered; the sequence is LKKAGRPGTSPLASKVGAPAAPSVKPQQQQEPLAAVRPPLG. The IQ domain maps to 4872–4901; sequence MDKAAVKIQAAFKGYKVRKEMKQQEGPMFS. 2 Ig-like domains span residues 4898-4989 and 5126-5215; these read PMFS…VVVS and PVFL…AELR. 2 cysteine pairs are disulfide-bonded: C4919-C4971 and C5147-C5199. Polar residues predominate over residues 5238-5256; the sequence is AQGYLSSREQEGTESTTDE. The segment at 5238-5257 is disordered; sequence AQGYLSSREQEGTESTTDEG. 2 consecutive Ig-like domains span residues 5260-5349 and 5371-5467; these read PQVV…ARLL and PRML…LHVS. The interval 5554–5596 is disordered; sequence AKLQVPGGDSDEDSKTPSASPRHGRSRPSSSIQESSSESEDGD. At S5563 the chain carries Phosphoserine. The residue at position 5569 (T5569) is a Phosphothreonine. The span at 5570-5589 shows a compositional bias: low complexity; it reads PSASPRHGRSRPSSSIQESS. Residues S5571 and S5573 each carry the phosphoserine modification. Residues 5600-5667 enclose the SH3 domain; it reads EIFDIYVVTA…SPAYLDRRLK (68 aa). Residues 5693-5877 form the DH domain; the sequence is RLSSVIQELL…SALPQRAENK (185 aa). A PH domain is found at 5895-6004; it reads EPIRQGHFIV…WVKEICGIQQ (110 aa). Residue R5975 coordinates a 1,2-diacyl-sn-glycero-3-phospho-(1D-myo-inositol-4,5-bisphosphate). R5980 is an a 1,2-diacyl-sn-glycero-3-phospho-(1D-myo-inositol-3,4-bisphosphate) binding site. 2 consecutive Ig-like domains span residues 6014–6097 and 6108–6200; these read PDFE…GNCS and PRFV…LRIQ. 2 disulfide bridges follow: C6035–C6087 and C6129–C6182. The interval 6237-6296 is disordered; that stretch reads RLLGPKAPGPSTGDLTGPGPCPRGAPALQETGSQPPVTGTSEAPAVPPRVPQPLLHEGPE. Residues 6266–6277 are compositionally biased toward polar residues; the sequence is ETGSQPPVTGTS. Residues 6357 to 6445 form the Ig-like 54 domain; the sequence is PSMQVTIEDV…GQVLCKAELL (89 aa). The 254-residue stretch at 6468-6721 folds into the Protein kinase 1 domain; it reads YEVKEEIGRG…AAQCLSHPWF (254 aa). ATP-binding positions include 6474–6482 and K6497; that span reads IGRGVFGFV. D6587 functions as the Proton acceptor in the catalytic mechanism. Disordered stretches follow at residues 6777 to 6863, 6952 to 7176, and 7217 to 7272; these read GVAR…AQGC, SGTH…TMRK, and VSQS…TPWE. Residue S6831 is modified to Phosphoserine. Positions 7052-7061 are enriched in pro residues; that stretch reads AVAPCPPGSF. Over residues 7115 to 7139 the composition is skewed to low complexity; the sequence is SSPGSASQASSSQVSSLRVGSSQVG. Residues 7160–7172 are compositionally biased toward polar residues; it reads DSTPTLQRPQEQA. The segment covering 7227-7242 has biased composition (basic and acidic residues); the sequence is EARAESQSEEQQEARA. S7244 is subject to Phosphoserine. The Ig-like 55 domain maps to 7463-7552; that stretch reads PTFLRELSDE…GTVTTTGVLR (90 aa). C7484 and C7536 are disulfide-bonded. Residues 7557-7649 enclose the Fibronectin type-III 4 domain; it reads PSSSPCPDIG…PSEQVLLGGP (93 aa). The Protein kinase 2 domain occupies 7672 to 7924; it reads FAFQTQIQRG…ASSCLQCPWL (253 aa). ATP is bound by residues 7678 to 7686 and K7701; that span reads IQRGRFSVV. D7791 (proton acceptor) is an active-site residue.

This sequence belongs to the protein kinase superfamily. CAMK Ser/Thr protein kinase family. As to quaternary structure, interacts (via protein kinase domain 2) with CDH2 and (via protein kinase domain 1) with ATP1B1. Isoform 3 interacts with TTN/titin and calmodulin. Isoform 3 interacts with ANK1 isoform Mu17/ank1.5. Mg(2+) is required as a cofactor. Post-translationally, autophosphorylated by protein kinase domains 1 and 2.

The protein localises to the cytoplasm. It localises to the myofibril. Its subcellular location is the sarcomere. The protein resides in the m line. It is found in the z line. The protein localises to the cell membrane. It localises to the sarcolemma. Its subcellular location is the nucleus. The enzyme catalyses L-seryl-[protein] + ATP = O-phospho-L-seryl-[protein] + ADP + H(+). It catalyses the reaction L-threonyl-[protein] + ATP = O-phospho-L-threonyl-[protein] + ADP + H(+). In terms of biological role, structural component of striated muscles which plays a role in myofibrillogenesis. Probably involved in the assembly of myosin into sarcomeric A bands in striated muscle. Has serine/threonine protein kinase activity and phosphorylates N-cadherin CDH2 and sodium/potassium-transporting ATPase subunit ATP1B1. Binds (via the PH domain) strongly to phosphatidylinositol 3,4-bisphosphate (PtdIns(3,4)P2) and phosphatidylinositol 4,5-bisphosphate (PtdIns(4,5)P2), and to a lesser extent to phosphatidylinositol 3-phosphate (PtdIns(3)P), phosphatidylinositol 4-phosphate (PtdIns(4)P), phosphatidylinositol 5-phosphate (PtdIns(5)P) and phosphatidylinositol 3,4,5-trisphosphate (PtdIns(3,4,5)P3). This chain is Obscurin (OBSCN), found in Homo sapiens (Human).